Consider the following 180-residue polypeptide: Cytochrome c oxidase assembly protein CtaG (180 aa).

Residues 1 to 8 (MSKKSNKS) are Cytoplasmic-facing. A helical; Signal-anchor for type II membrane protein membrane pass occupies residues 9-29 (LAFSLLGLIVSMVLLSFAAVP). The Periplasmic segment spans residues 30-180 (LYNLFCKVTG…SFFKVRDVKK (151 aa)).

It belongs to the COX11/CtaG family.

The protein resides in the cell inner membrane. Exerts its effect at some terminal stage of cytochrome c oxidase synthesis, probably by being involved in the insertion of the copper B into subunit I. The protein is Cytochrome c oxidase assembly protein CtaG of Rickettsia bellii (strain RML369-C).